The chain runs to 240 residues: ATP-dependent dethiobiotin synthetase BioD (240 aa).

ATP is bound at residue 13-18 (EVGKTV). Threonine 17 contributes to the Mg(2+) binding site. The active site involves lysine 38. Serine 42 is a substrate binding site. ATP-binding positions include aspartate 55, 116 to 119 (EGAG), 176 to 177 (ND), and 205 to 207 (PWL). 2 residues coordinate Mg(2+): aspartate 55 and glutamate 116.

It belongs to the dethiobiotin synthetase family. In terms of assembly, homodimer. Mg(2+) is required as a cofactor.

It is found in the cytoplasm. It catalyses the reaction (7R,8S)-7,8-diammoniononanoate + CO2 + ATP = (4R,5S)-dethiobiotin + ADP + phosphate + 3 H(+). The protein operates within cofactor biosynthesis; biotin biosynthesis; biotin from 7,8-diaminononanoate: step 1/2. Its function is as follows. Catalyzes a mechanistically unusual reaction, the ATP-dependent insertion of CO2 between the N7 and N8 nitrogen atoms of 7,8-diaminopelargonic acid (DAPA, also called 7,8-diammoniononanoate) to form a ureido ring. This is ATP-dependent dethiobiotin synthetase BioD from Pseudescherichia vulneris (Escherichia vulneris).